The chain runs to 286 residues: 3-hydroxyanthranilate 3,4-dioxygenase (286 aa).

Positions 1 to 160 (MERPVRVKAW…SEQYRTGKPN (160 aa)) are domain A (catalytic). Arg-43 provides a ligand contact to O2. Residues His-47, Glu-53, and His-91 each coordinate Fe cation. Glu-53 contacts substrate. Residues Arg-95 and Glu-105 each coordinate substrate. A linker region spans residues 161–177 (PDQLLKEPPFPLSTRSV). The interval 178-286 (MEPMCLEAWL…QDPACKKSLG (109 aa)) is domain B.

It belongs to the 3-HAO family. In terms of assembly, monomer. It depends on Fe(2+) as a cofactor.

The protein resides in the cytoplasm. The protein localises to the cytosol. It catalyses the reaction 3-hydroxyanthranilate + O2 = (2Z,4Z)-2-amino-3-carboxymuconate 6-semialdehyde. The protein operates within cofactor biosynthesis; NAD(+) biosynthesis; quinolinate from L-kynurenine: step 3/3. Its function is as follows. Catalyzes the oxidative ring opening of 3-hydroxyanthranilate to 2-amino-3-carboxymuconate semialdehyde, which spontaneously cyclizes to quinolinate. In Bos taurus (Bovine), this protein is 3-hydroxyanthranilate 3,4-dioxygenase.